A 276-amino-acid polypeptide reads, in one-letter code: uncharacterized protein (276 aa).

It to E.cuniculi ECU05_1600/ECU11_0130.

This is an uncharacterized protein from Encephalitozoon cuniculi (strain GB-M1) (Microsporidian parasite).